The primary structure comprises 476 residues: mRNA cap guanine-N(7) methyltransferase (476 aa).

Residues 1-14 show a composition bias toward basic and acidic residues; the sequence is MANSAKAEEYEKMS. The segment at 1-146 is disordered; that stretch reads MANSAKAEEY…KQKNLEEGHS (146 aa). Positions 20 to 50 are enriched in polar residues; it reads ASVNSETESSFNINENTTASGTGLSEKTSVC. Ser24, Ser28, and Ser29 each carry phosphoserine. Composition is skewed to basic and acidic residues over residues 54–68 and 84–118; these read DIARKRKEFEDDLVK and LDPEIVPEEKDCGDAEGNSKKRKRETEDVPKDKSS. Residue Ser118 is modified to Phosphoserine. Positions 126-128 match the Nuclear localization signal motif; it reads KRK. Residues 129-145 are compositionally biased toward basic and acidic residues; sequence IALEDVPEKQKNLEEGH. One can recognise an mRNA cap 0 methyltransferase domain in the interval 167-475; that stretch reads SRIFYLRNFN…IYLVFAFEKQ (309 aa). Position 176–177 (176–177) interacts with mRNA; that stretch reads NN. S-adenosyl-L-methionine is bound by residues Lys180, Gly205, Asp227, Asp261, Gln284, and Tyr289.

Belongs to the class I-like SAM-binding methyltransferase superfamily. mRNA cap 0 methyltransferase family. As to quaternary structure, interacts with importin alpha, leading to stimulate both RNA-binding and methyltransferase activity. Interaction with importin alpha and beta is required for its nuclear localization, importin beta dissociating in response to RanGTP, allowing RNMT-importin alpha to bind RNA substrates. Interacts with elongating form of polymerase II and RNGTT. Interacts with RAMAC, this interaction significantly enhances RNA-binding and cap methyltransferase activity. Widely expressed.

The protein localises to the nucleus. The enzyme catalyses a 5'-end (5'-triphosphoguanosine)-ribonucleoside in mRNA + S-adenosyl-L-methionine = a 5'-end (N(7)-methyl 5'-triphosphoguanosine)-ribonucleoside in mRNA + S-adenosyl-L-homocysteine. Methyltransferase activity is activated by RAMAC. Its function is as follows. Catalytic subunit of the mRNA-capping methyltransferase RNMT:RAMAC complex that methylates the N7 position of the added guanosine to the 5'-cap structure of mRNAs. Binds RNA containing 5'-terminal GpppC. The chain is mRNA cap guanine-N(7) methyltransferase (RNMT) from Homo sapiens (Human).